We begin with the raw amino-acid sequence, 233 residues long: tRNA (guanine-N(7)-)-methyltransferase (233 aa).

Glu62, Glu87, Asp116, and Asp138 together coordinate S-adenosyl-L-methionine. Asp138 is an active-site residue. Substrate-binding positions include Lys142, Asp174, and 212-215 (TRYE).

This sequence belongs to the class I-like SAM-binding methyltransferase superfamily. TrmB family.

It catalyses the reaction guanosine(46) in tRNA + S-adenosyl-L-methionine = N(7)-methylguanosine(46) in tRNA + S-adenosyl-L-homocysteine. It participates in tRNA modification; N(7)-methylguanine-tRNA biosynthesis. Catalyzes the formation of N(7)-methylguanine at position 46 (m7G46) in tRNA. The polypeptide is tRNA (guanine-N(7)-)-methyltransferase (Bartonella henselae (strain ATCC 49882 / DSM 28221 / CCUG 30454 / Houston 1) (Rochalimaea henselae)).